The chain runs to 90 residues: MSRTVFCARLNKEADGLDFQLYPGELGKRIFDNISKEAWGQWQHKQTMLINEKKLNMMDPEHRKLLETEMVNFLFEGKEVHIEGYTPPSK.

It belongs to the Fe(2+)-trafficking protein family.

Could be a mediator in iron transactions between iron acquisition and iron-requiring processes, such as synthesis and/or repair of Fe-S clusters in biosynthetic enzymes. The protein is Probable Fe(2+)-trafficking protein of Vibrio vulnificus (strain CMCP6).